Here is a 247-residue protein sequence, read N- to C-terminus: Chymase (247 aa).

Residues 1 to 19 (MNLHALCLLLLLLGSSTKA) form the signal peptide. Residues 20 to 21 (GE) constitute a propeptide, activation peptide. One can recognise a Peptidase S1 domain in the interval 22–245 (IIGGTECIPH…YRPWINKILR (224 aa)). A disulfide bond links Cys51 and Cys67. His66 serves as the catalytic Charge relay system. An N-linked (GlcNAc...) asparagine glycan is attached at Asn80. Catalysis depends on Asp110, which acts as the Charge relay system. Cystine bridges form between Cys144–Cys209 and Cys175–Cys188. Ser203 serves as the catalytic Charge relay system.

The protein belongs to the peptidase S1 family. Granzyme subfamily. As to expression, mast cells.

The protein resides in the secreted. It localises to the cytoplasmic granule. It catalyses the reaction Preferential cleavage: Phe-|-Xaa &gt; Tyr-|-Xaa &gt; Trp-|-Xaa &gt; Leu-|-Xaa.. Major secreted protease of mast cells with suspected roles in vasoactive peptide generation, extracellular matrix degradation, and regulation of gland secretion. This chain is Chymase (Cma1), found in Rattus norvegicus (Rat).